A 1140-amino-acid polypeptide reads, in one-letter code: Eukaryotic translation initiation factor 3 subunit A (1140 aa).

In terms of domain architecture, PCI spans 319-501; that stretch reads LQRMAAHVLL…NSIYFGTDLT (183 aa). 2 stretches are compositionally biased toward basic and acidic residues: residues 588–623 and 829–899; these read QNNAREEEEARRQEEESRKAKLAEQKRLEQEQEERE and AAEE…RGGD. Disordered regions lie at residues 588–630 and 829–1140; these read QNNA…HQNE and AAEE…VKRR. Serine 908 is subject to Phosphoserine. Composition is skewed to basic and acidic residues over residues 920–976, 990–1051, 1059–1086, and 1109–1130; these read ERND…EPDS, SRDD…EPQR, DAPRHADRETRRPAERRDRDVRETRGDQ, and TREEKPAAKRDQAQEKENKAGD.

It belongs to the eIF-3 subunit A family. As to quaternary structure, component of the eukaryotic translation initiation factor 3 (eIF-3) complex. The eIF-3 complex interacts with pix.

It is found in the cytoplasm. Its function is as follows. RNA-binding component of the eukaryotic translation initiation factor 3 (eIF-3) complex, which is involved in protein synthesis of a specialized repertoire of mRNAs and, together with other initiation factors, stimulates binding of mRNA and methionyl-tRNAi to the 40S ribosome. The eIF-3 complex specifically targets and initiates translation of a subset of mRNAs involved in cell proliferation. The polypeptide is Eukaryotic translation initiation factor 3 subunit A (Drosophila melanogaster (Fruit fly)).